The following is a 29-amino-acid chain: Cytolysin Oshem 1 (29 aa).

The protein localises to the secreted. It localises to the nematocyst. It is found in the target cell membrane. Cytolysin that shows moderate hemolysis and moderate myonecrosis. In Olindias sambaquiensis (Hydromedusa), this protein is Cytolysin Oshem 1.